Here is a 123-residue protein sequence, read N- to C-terminus: uncharacterized protein (123 aa).

This is an uncharacterized protein from Autographa californica nuclear polyhedrosis virus (AcMNPV).